The following is a 214-amino-acid chain: Pyrrolidone-carboxylate peptidase (214 aa).

Residues E80, C143, and H166 contribute to the active site.

This sequence belongs to the peptidase C15 family. In terms of assembly, homotetramer.

The protein localises to the cytoplasm. The catalysed reaction is Release of an N-terminal pyroglutamyl group from a polypeptide, the second amino acid generally not being Pro.. In terms of biological role, removes 5-oxoproline from various penultimate amino acid residues except L-proline. The polypeptide is Pyrrolidone-carboxylate peptidase (Escherichia fergusonii (strain ATCC 35469 / DSM 13698 / CCUG 18766 / IAM 14443 / JCM 21226 / LMG 7866 / NBRC 102419 / NCTC 12128 / CDC 0568-73)).